The primary structure comprises 189 residues: UPF0232 protein MLBr00004 (189 aa).

Residues 59 to 78 are disordered; sequence TDRRRNWSGPGPDVRDPQPL.

This sequence belongs to the UPF0232 family.

The polypeptide is UPF0232 protein MLBr00004 (Mycobacterium leprae (strain Br4923)).